The following is a 235-amino-acid chain: Futalosine hydrolase (235 aa).

It belongs to the PNP/UDP phosphorylase family. Futalosine hydrolase subfamily.

The enzyme catalyses futalosine + H2O = dehypoxanthine futalosine + hypoxanthine. The protein operates within quinol/quinone metabolism; menaquinone biosynthesis. Its function is as follows. Catalyzes the hydrolysis of futalosine (FL) to dehypoxanthine futalosine (DHFL) and hypoxanthine, a step in the biosynthesis of menaquinone (MK, vitamin K2). Does not accept aminodeoxyfutalosine (AFL) as a substrate. The chain is Futalosine hydrolase from Streptomyces coelicolor (strain ATCC BAA-471 / A3(2) / M145).